The chain runs to 483 residues: Uroporphyrinogen-III C-methyltransferase (483 aa).

The protein belongs to the precorrin methyltransferase family.

The catalysed reaction is uroporphyrinogen III + 2 S-adenosyl-L-methionine = precorrin-2 + 2 S-adenosyl-L-homocysteine + H(+). The chain is Uroporphyrinogen-III C-methyltransferase (nasF) from Bacillus subtilis (strain 168).